The following is a 261-amino-acid chain: Cytochrome c oxidase subunit 3 (261 aa).

Over 1 to 15 (MTHQTHAYHMVNPSP) the chain is Mitochondrial matrix. Residues 16–34 (WPLTGALSALLMTSGLIMW) form a helical membrane-spanning segment. At 35–40 (FHFNSV) the chain is on the mitochondrial intermembrane side. The chain crosses the membrane as a helical span at residues 41–66 (ALLMLGLTTNMLTMYQWWRDVIREST). Topologically, residues 67 to 72 (FQGHHT) are mitochondrial matrix. Residues 73-105 (PNVQKGLRYGMILFIISEVLFFTGFFWAFYHSS) traverse the membrane as a helical segment. Topologically, residues 106–128 (LAPTPELGGCWPPTGIHPLNPLE) are mitochondrial intermembrane. A helical transmembrane segment spans residues 129–152 (VPLLNTSVLLASGVSITWAHHSLM). Topologically, residues 153–155 (EGN) are mitochondrial matrix. Residues 156–183 (RNHMLQALFITIALGVYFTLLQASEYYE) traverse the membrane as a helical segment. At 184–190 (APFTISD) the chain is on the mitochondrial intermembrane side. Residues 191–223 (GVYGSTFFVATGFHGLHVIIGSTFLIVCFFRQL) form a helical membrane-spanning segment. At 224–232 (KFHFTSSHH) the chain is on the mitochondrial matrix side. The chain crosses the membrane as a helical span at residues 233 to 256 (FGFEAAAWYWHFVDVVWLFLYVSI). Over 257 to 261 (YWWGS) the chain is Mitochondrial intermembrane.

The protein belongs to the cytochrome c oxidase subunit 3 family. In terms of assembly, component of the cytochrome c oxidase (complex IV, CIV), a multisubunit enzyme composed of 14 subunits. The complex is composed of a catalytic core of 3 subunits MT-CO1, MT-CO2 and MT-CO3, encoded in the mitochondrial DNA, and 11 supernumerary subunits COX4I, COX5A, COX5B, COX6A, COX6B, COX6C, COX7A, COX7B, COX7C, COX8 and NDUFA4, which are encoded in the nuclear genome. The complex exists as a monomer or a dimer and forms supercomplexes (SCs) in the inner mitochondrial membrane with NADH-ubiquinone oxidoreductase (complex I, CI) and ubiquinol-cytochrome c oxidoreductase (cytochrome b-c1 complex, complex III, CIII), resulting in different assemblies (supercomplex SCI(1)III(2)IV(1) and megacomplex MCI(2)III(2)IV(2)).

It is found in the mitochondrion inner membrane. The enzyme catalyses 4 Fe(II)-[cytochrome c] + O2 + 8 H(+)(in) = 4 Fe(III)-[cytochrome c] + 2 H2O + 4 H(+)(out). Its function is as follows. Component of the cytochrome c oxidase, the last enzyme in the mitochondrial electron transport chain which drives oxidative phosphorylation. The respiratory chain contains 3 multisubunit complexes succinate dehydrogenase (complex II, CII), ubiquinol-cytochrome c oxidoreductase (cytochrome b-c1 complex, complex III, CIII) and cytochrome c oxidase (complex IV, CIV), that cooperate to transfer electrons derived from NADH and succinate to molecular oxygen, creating an electrochemical gradient over the inner membrane that drives transmembrane transport and the ATP synthase. Cytochrome c oxidase is the component of the respiratory chain that catalyzes the reduction of oxygen to water. Electrons originating from reduced cytochrome c in the intermembrane space (IMS) are transferred via the dinuclear copper A center (CU(A)) of subunit 2 and heme A of subunit 1 to the active site in subunit 1, a binuclear center (BNC) formed by heme A3 and copper B (CU(B)). The BNC reduces molecular oxygen to 2 water molecules using 4 electrons from cytochrome c in the IMS and 4 protons from the mitochondrial matrix. This chain is Cytochrome c oxidase subunit 3 (MT-CO3), found in Nanger granti (Grant's gazelle).